We begin with the raw amino-acid sequence, 396 residues long: Elongation factor Tu (396 aa).

The region spanning 10 to 206 (KPHVNVGTIG…ALDSYIPTPE (197 aa)) is the tr-type G domain. The tract at residues 19–26 (GHVDHGKT) is G1. 19–26 (GHVDHGKT) is a binding site for GTP. Residue T26 coordinates Mg(2+). The tract at residues 60–64 (GITIN) is G2. The segment at 81 to 84 (DCPG) is G3. Residues 81-85 (DCPGH) and 136-139 (NKCD) each bind GTP. The tract at residues 136 to 139 (NKCD) is G4. Residues 174-176 (SAK) form a G5 region.

This sequence belongs to the TRAFAC class translation factor GTPase superfamily. Classic translation factor GTPase family. EF-Tu/EF-1A subfamily. As to quaternary structure, monomer.

It localises to the cytoplasm. The catalysed reaction is GTP + H2O = GDP + phosphate + H(+). Its function is as follows. GTP hydrolase that promotes the GTP-dependent binding of aminoacyl-tRNA to the A-site of ribosomes during protein biosynthesis. This chain is Elongation factor Tu, found in Methylibium petroleiphilum (strain ATCC BAA-1232 / LMG 22953 / PM1).